Reading from the N-terminus, the 457-residue chain is Senescence-associated protein OSA15, chloroplastic (457 aa).

The transit peptide at 1-57 (MATRIPGTVAASGVYYNDQYRMPCKLKGIHCMALNCIPQKAKVRKCMNGYQSTFRFC) directs the protein to the chloroplast.

It belongs to the ATA15/OSA15 family. In terms of tissue distribution, expressed in leaves (at protein level).

Its subcellular location is the plastid. The protein resides in the chloroplast. Its function is as follows. May be involved in the regulation of leaf senescence. This is Senescence-associated protein OSA15, chloroplastic from Oryza sativa subsp. japonica (Rice).